The following is a 198-amino-acid chain: Nucleoid occlusion factor SlmA (198 aa).

The 61-residue stretch at 10–70 (NRREEILQSL…SLIEFIEDSL (61 aa)) folds into the HTH tetR-type domain. The segment at residues 33 to 52 (TTAKLAASVGVSEAALYRHF) is a DNA-binding region (H-T-H motif). Residues 117–144 (EQDRLQGRINQLFERIEAQLRQVLREKR) are a coiled coil.

Belongs to the nucleoid occlusion factor SlmA family. Homodimer. Interacts with FtsZ.

The protein localises to the cytoplasm. The protein resides in the nucleoid. Functionally, required for nucleoid occlusion (NO) phenomenon, which prevents Z-ring formation and cell division over the nucleoid. Acts as a DNA-associated cell division inhibitor that binds simultaneously chromosomal DNA and FtsZ, and disrupts the assembly of FtsZ polymers. SlmA-DNA-binding sequences (SBS) are dispersed on non-Ter regions of the chromosome, preventing FtsZ polymerization at these regions. In Escherichia coli (strain 55989 / EAEC), this protein is Nucleoid occlusion factor SlmA.